Here is a 424-residue protein sequence, read N- to C-terminus: Serine--tRNA ligase (424 aa).

Residue 230 to 232 (TAE) coordinates L-serine. 261 to 263 (RAE) contributes to the ATP binding site. Position 284 (E284) interacts with L-serine. Residue 348–351 (EISS) participates in ATP binding. S384 provides a ligand contact to L-serine.

It belongs to the class-II aminoacyl-tRNA synthetase family. Type-1 seryl-tRNA synthetase subfamily. Homodimer. The tRNA molecule binds across the dimer.

It localises to the cytoplasm. The catalysed reaction is tRNA(Ser) + L-serine + ATP = L-seryl-tRNA(Ser) + AMP + diphosphate + H(+). It catalyses the reaction tRNA(Sec) + L-serine + ATP = L-seryl-tRNA(Sec) + AMP + diphosphate + H(+). Its pathway is aminoacyl-tRNA biosynthesis; selenocysteinyl-tRNA(Sec) biosynthesis; L-seryl-tRNA(Sec) from L-serine and tRNA(Sec): step 1/1. Catalyzes the attachment of serine to tRNA(Ser). Is also able to aminoacylate tRNA(Sec) with serine, to form the misacylated tRNA L-seryl-tRNA(Sec), which will be further converted into selenocysteinyl-tRNA(Sec). This is Serine--tRNA ligase from Desulforamulus reducens (strain ATCC BAA-1160 / DSM 100696 / MI-1) (Desulfotomaculum reducens).